Here is a 376-residue protein sequence, read N- to C-terminus: Carbapenem antibiotics biosynthesis protein CarD (376 aa).

The protein belongs to the proline oxidase family.

It participates in antibiotic biosynthesis; carbapenem biosynthesis. In Pectobacterium carotovorum subsp. carotovorum (Erwinia carotovora subsp. carotovora), this protein is Carbapenem antibiotics biosynthesis protein CarD (carD).